The following is a 702-amino-acid chain: Elongation factor G (702 aa).

The tr-type G domain occupies 8-290 (ERYRNIGISA…GVVEYLPSPV (283 aa)). GTP-binding positions include 17–24 (AHIDAGKT), 88–92 (DTPGH), and 142–145 (NKMD).

Belongs to the TRAFAC class translation factor GTPase superfamily. Classic translation factor GTPase family. EF-G/EF-2 subfamily.

It localises to the cytoplasm. Functionally, catalyzes the GTP-dependent ribosomal translocation step during translation elongation. During this step, the ribosome changes from the pre-translocational (PRE) to the post-translocational (POST) state as the newly formed A-site-bound peptidyl-tRNA and P-site-bound deacylated tRNA move to the P and E sites, respectively. Catalyzes the coordinated movement of the two tRNA molecules, the mRNA and conformational changes in the ribosome. The polypeptide is Elongation factor G (Janthinobacterium sp. (strain Marseille) (Minibacterium massiliensis)).